A 247-amino-acid chain; its full sequence is Probable transcriptional regulatory protein DVU_2259 (247 aa).

Residues 1-22 form a disordered region; that stretch reads MAGHSKWANIQHRKGRQDAKRG.

The protein belongs to the TACO1 family.

Its subcellular location is the cytoplasm. In Nitratidesulfovibrio vulgaris (strain ATCC 29579 / DSM 644 / CCUG 34227 / NCIMB 8303 / VKM B-1760 / Hildenborough) (Desulfovibrio vulgaris), this protein is Probable transcriptional regulatory protein DVU_2259.